Reading from the N-terminus, the 109-residue chain is MKGQKSYRIKKNDTVMVVTGKDKGKSGKVLRVIYKKDRAIVEKLNMIKRHMKPSQQNRQGGILEKESPIHISNLMLICAKCTDPTRVGYKVLDDNKKVRFCKKCNEVID.

It belongs to the universal ribosomal protein uL24 family. Part of the 50S ribosomal subunit.

In terms of biological role, one of two assembly initiator proteins, it binds directly to the 5'-end of the 23S rRNA, where it nucleates assembly of the 50S subunit. One of the proteins that surrounds the polypeptide exit tunnel on the outside of the subunit. This Syntrophobacter fumaroxidans (strain DSM 10017 / MPOB) protein is Large ribosomal subunit protein uL24.